We begin with the raw amino-acid sequence, 277 residues long: 2,3,4,5-tetrahydropyridine-2,6-dicarboxylate N-succinyltransferase (277 aa).

Residues R106 and D143 each coordinate substrate.

This sequence belongs to the transferase hexapeptide repeat family. Homotrimer.

It localises to the cytoplasm. The enzyme catalyses (S)-2,3,4,5-tetrahydrodipicolinate + succinyl-CoA + H2O = (S)-2-succinylamino-6-oxoheptanedioate + CoA. It functions in the pathway amino-acid biosynthesis; L-lysine biosynthesis via DAP pathway; LL-2,6-diaminopimelate from (S)-tetrahydrodipicolinate (succinylase route): step 1/3. This chain is 2,3,4,5-tetrahydropyridine-2,6-dicarboxylate N-succinyltransferase, found in Variovorax paradoxus (strain S110).